The following is a 122-amino-acid chain: Large ribosomal subunit protein uL14 (122 aa).

This sequence belongs to the universal ribosomal protein uL14 family. In terms of assembly, part of the 50S ribosomal subunit. Forms a cluster with proteins L3 and L19. In the 70S ribosome, L14 and L19 interact and together make contacts with the 16S rRNA in bridges B5 and B8.

Functionally, binds to 23S rRNA. Forms part of two intersubunit bridges in the 70S ribosome. The protein is Large ribosomal subunit protein uL14 of Bordetella avium (strain 197N).